We begin with the raw amino-acid sequence, 675 residues long: Heat shock 70 kDa protein 12A (675 aa).

Positions 1-45 are disordered; sequence MADKEAGGGDAGPRETAPTSTYSSPARSLGDTGITPLSPSHILND. Residue A2 is modified to N-acetylalanine. The segment covering 17–26 has biased composition (polar residues); the sequence is APTSTYSSPA.

Belongs to the heat shock protein 70 family. Interacts with SORL1 (via cytosolic C-terminus); this interaction affects SORL1 internalization and subcellular localization. As to expression, expressed most strongly in brain, kidney and heart with little or no expression in other tissues. In the brain, expressed in glial cells, including astrocytes (at protein level). In the aorta, preferentially expressed in lesions.

The protein localises to the cytoplasm. It is found in the nucleus. In terms of biological role, adapter protein for SORL1, but not SORT1. Delays SORL1 internalization and affects SORL1 subcellular localization. This chain is Heat shock 70 kDa protein 12A (Hspa12a), found in Mus musculus (Mouse).